Consider the following 302-residue polypeptide: MAANYWASTQRRHWLFTRERLAEIREAFRERHKLAHSQFPLPDQRLLNIYFSQQLIKLGKRMSTRQQALATAQVYIKRFYTKNEIRHTNPYLVLTTAFYLACKMEECPQHIRFVVGEARSLWPEFITPDVSKLGECEFSLISEMNSQLIVHHPYRTLSGLQSELSLTSDEVALAWSVINDHYLTDLPLLYSPHVIAVMAVMVAVVFKPGPGNFHGSAAPVLAGAMRDGGMNMLAALGDKSGNEPPPKVQKLINWLAESEVDIKAVIECTQELVSLYEVWEQYSEKNCKELLGRMVKTKHLDK.

The 90-residue stretch at 53–142 folds into the Cyclin N-terminal domain; sequence QQLIKLGKRM…LGECEFSLIS (90 aa).

The protein belongs to the cyclin family. Cyclin C subfamily. Component of the srb8-11 complex, a regulatory module of the Mediator complex.

The protein localises to the nucleus. Component of the srb8-11 complex. The srb8-11 complex is a regulatory module of the Mediator complex which is itself involved in regulation of basal and activated RNA polymerase II-dependent transcription. The srb8-11 complex may be involved in the transcriptional repression of a subset of genes regulated by Mediator. It may inhibit the association of the Mediator complex with RNA polymerase II to form the holoenzyme complex. The srb8-11 complex phosphorylates the C-terminal domain (CTD) of the largest subunit of RNA polymerase II. The chain is RNA polymerase II holoenzyme cyclin-like subunit (ssn8) from Aspergillus clavatus (strain ATCC 1007 / CBS 513.65 / DSM 816 / NCTC 3887 / NRRL 1 / QM 1276 / 107).